The chain runs to 61 residues: Calprismin (61 aa).

In terms of processing, glycosylated. Expressed by the calcifying mantle epithelium and incorporated into the shell's calcitic prismatic layer.

The chain is Calprismin from Pinna nobilis (Noble pen shell).